The primary structure comprises 378 residues: Pulmonary surfactant-associated protein D (378 aa).

Residues 1–20 (MLLLPLSVLILLTQPPRSLG) form the signal peptide. Cys-35 and Cys-40 each carry S-nitrosocysteine. The disordered stretch occupies residues 43 to 221 (MENGLPGRDG…ERGAKGESGL (179 aa)). The Collagen-like domain maps to 46 to 222 (GLPGRDGRDG…RGAKGESGLP (177 aa)). The segment covering 50–65 (RDGRDGREGPRGEKGD) has biased composition (basic and acidic residues). Position 78 is a 4-hydroxyproline (Pro-78). A 5-hydroxylysine modification is found at Lys-87. The N-linked (GlcNAc...) asparagine glycan is linked to Asn-90. Pro-96 is modified (4-hydroxyproline). Residue Lys-99 is modified to 5-hydroxylysine. Residues 105–114 (CGPPGPPGIP) show a composition bias toward pro residues. Low complexity predominate over residues 137 to 146 (PKGETGPKGE). A 4-hydroxyproline mark is found at Pro-171 and Pro-177. Positions 173 to 197 (ERGAPGSAGAAGPAGATGPQGPSGA) are enriched in low complexity. Residues 204-216 (KGDRGPPGERGAK) are compositionally biased toward basic and acidic residues. Positions 223 to 254 (GITALRQQVETLQGQVQRLQKAFSQYKKVELF) form a coiled coil. The C-type lectin domain occupies 260 to 378 (VGEKIFKTGG…GELRLVICEF (119 aa)). Intrachain disulfides connect Cys-281-Cys-376 and Cys-354-Cys-368. N-linked (GlcNAc...) asparagine glycosylation is present at Asn-323.

This sequence belongs to the SFTPD family. Oligomeric complex of 4 set of homotrimers. In terms of processing, hydroxylation on proline residues within the sequence motif, GXPG, is most likely to be 4-hydroxy as this fits the requirement for 4-hydroxylation in vertebrates. Post-translationally, S-nitrosylation at Cys-35 and Cys-40 alters the quaternary structure which results in a pro-inflammatory chemoattractive signaling activity with macrophages.

Its subcellular location is the secreted. It is found in the extracellular space. It localises to the extracellular matrix. The protein resides in the surface film. Contributes to the lung's defense against inhaled microorganisms, organic antigens and toxins. Interacts with compounds such as bacterial lipopolysaccharides, oligosaccharides and fatty acids and modulates leukocyte action in immune response. May participate in the extracellular reorganization or turnover of pulmonary surfactant. Binds strongly maltose residues and to a lesser extent other alpha-glucosyl moieties. This Sus scrofa (Pig) protein is Pulmonary surfactant-associated protein D (SFTPD).